A 495-amino-acid polypeptide reads, in one-letter code: UDP-N-acetylmuramoyl-L-alanyl-D-glutamate--2,6-diaminopimelate ligase (495 aa).

Residues leucine 27, serine 29, and 44 to 46 contribute to the UDP-N-acetyl-alpha-D-muramoyl-L-alanyl-D-glutamate site; that span reads HQA. 116-122 provides a ligand contact to ATP; that stretch reads GTNGKTT. UDP-N-acetyl-alpha-D-muramoyl-L-alanyl-D-glutamate is bound by residues asparagine 157, 158 to 159, serine 185, glutamine 191, and arginine 193; that span reads TT. Lysine 225 carries the N6-carboxylysine modification. Residues arginine 390, 414–417, glycine 465, and glutamate 469 each bind meso-2,6-diaminopimelate; that span reads DNPR. The Meso-diaminopimelate recognition motif motif lies at 414-417; sequence DNPR.

The protein belongs to the MurCDEF family. MurE subfamily. Mg(2+) serves as cofactor. Carboxylation is probably crucial for Mg(2+) binding and, consequently, for the gamma-phosphate positioning of ATP.

The protein localises to the cytoplasm. The catalysed reaction is UDP-N-acetyl-alpha-D-muramoyl-L-alanyl-D-glutamate + meso-2,6-diaminopimelate + ATP = UDP-N-acetyl-alpha-D-muramoyl-L-alanyl-gamma-D-glutamyl-meso-2,6-diaminopimelate + ADP + phosphate + H(+). It participates in cell wall biogenesis; peptidoglycan biosynthesis. In terms of biological role, catalyzes the addition of meso-diaminopimelic acid to the nucleotide precursor UDP-N-acetylmuramoyl-L-alanyl-D-glutamate (UMAG) in the biosynthesis of bacterial cell-wall peptidoglycan. This chain is UDP-N-acetylmuramoyl-L-alanyl-D-glutamate--2,6-diaminopimelate ligase, found in Shigella flexneri.